A 585-amino-acid chain; its full sequence is Glutamine--tRNA ligase (585 aa).

A 'HIGH' region motif is present at residues Pro-51–His-61. ATP-binding positions include Glu-52 to Asn-54 and His-58 to Ser-64. L-glutamine contacts are provided by Asp-84 and Tyr-238. Residues Thr-257 and Arg-292–Leu-293 contribute to the ATP site. Positions Ile-299–Arg-303 match the 'KMSKS' region motif.

Belongs to the class-I aminoacyl-tRNA synthetase family. Monomer.

The protein localises to the cytoplasm. It catalyses the reaction tRNA(Gln) + L-glutamine + ATP = L-glutaminyl-tRNA(Gln) + AMP + diphosphate. This Cupriavidus taiwanensis (strain DSM 17343 / BCRC 17206 / CCUG 44338 / CIP 107171 / LMG 19424 / R1) (Ralstonia taiwanensis (strain LMG 19424)) protein is Glutamine--tRNA ligase.